A 99-amino-acid polypeptide reads, in one-letter code: ATP synthase subunit c (99 aa).

2 helical membrane passes run 23-43 and 78-98; these read GAGIGYGLVAVGAGLAMIGAL and MGIAETAAIYSLIIAILLIFV.

This sequence belongs to the ATPase C chain family. F-type ATPases have 2 components, F(1) - the catalytic core - and F(0) - the membrane proton channel. F(1) has five subunits: alpha(3), beta(3), gamma(1), delta(1), epsilon(1). F(0) has three main subunits: a(1), b(2) and c(10-14). The alpha and beta chains form an alternating ring which encloses part of the gamma chain. F(1) is attached to F(0) by a central stalk formed by the gamma and epsilon chains, while a peripheral stalk is formed by the delta and b chains.

The protein resides in the cell membrane. F(1)F(0) ATP synthase produces ATP from ADP in the presence of a proton or sodium gradient. F-type ATPases consist of two structural domains, F(1) containing the extramembraneous catalytic core and F(0) containing the membrane proton channel, linked together by a central stalk and a peripheral stalk. During catalysis, ATP synthesis in the catalytic domain of F(1) is coupled via a rotary mechanism of the central stalk subunits to proton translocation. In terms of biological role, key component of the F(0) channel; it plays a direct role in translocation across the membrane. A homomeric c-ring of between 10-14 subunits forms the central stalk rotor element with the F(1) delta and epsilon subunits. In Mycoplasma mobile (strain ATCC 43663 / 163K / NCTC 11711) (Mesomycoplasma mobile), this protein is ATP synthase subunit c.